A 215-amino-acid polypeptide reads, in one-letter code: MTRTPTTRMGLLEVRGRADVASKGARLLRAKREVLAGELWKLTREVLAGRARLDEVLRGAVKALGLARALEGEEALASVALTAAREVPLQVSVRRVWGVPTPSVAAPALIRAADERGSSPTSWGLAGTEAARRHEEALEVLLRIASRELHLARLGEEIQATSRRINALEQLVLPALTAESGRIEAALEERDREDVVRLKRFRARRPRREASARRP.

This sequence belongs to the V-ATPase D subunit family.

Its function is as follows. Produces ATP from ADP in the presence of a proton gradient across the membrane. This Anaeromyxobacter sp. (strain Fw109-5) protein is V-type ATP synthase subunit D.